The chain runs to 343 residues: Cilia- and flagella-associated protein 36 (343 aa).

2 positions are modified to phosphoserine: serine 85 and serine 147. Residues 147 to 181 (SDLEQEEMKILREVLRKSKEEYDQEEERKRKKQSS) are a coiled coil. Residues 165 to 191 (KEEYDQEEERKRKKQSSEGKMEEPPIY) are disordered. Position 201 is a phosphoserine (serine 201). The segment at 286–323 (SMRKDMRAKQIQNTEQKGKPTREAEEMTEKPEMTAEEK) is disordered. Over residues 301–323 (QKGKPTREAEEMTEKPEMTAEEK) the composition is skewed to basic and acidic residues.

It belongs to the CFAP36 family. Interacts with ARL3. Widely expressed (at protein level).

Its subcellular location is the nucleus. It is found in the cytoplasm. It localises to the cell projection. The protein resides in the cilium. The protein localises to the flagellum. In terms of biological role, may act as an effector for ARL3. The sequence is that of Cilia- and flagella-associated protein 36 from Rattus norvegicus (Rat).